The chain runs to 2925 residues: TPR and ankyrin repeat-containing protein 1 (2925 aa).

TPR repeat units follow at residues 15 to 48 (AVLL…DPTY) and 50 to 82 (KGYY…VQRS). 6 ANK repeats span residues 168–198 (EKYV…SVET), 203–232 (PLHA…EWKG), 240–276 (DGCT…DPTL), 463–492 (SQER…DPRA), 497–518 (EGDT…DIGF), and 546–575 (NGNT…KFDI). Disordered stretches follow at residues 612-669 (SRQD…LPGT), 706-741 (PEDC…DCSE), and 1077-1103 (VEPG…SIEV). Residues 624–641 (SKSTAPGHTSQLKSQGSF) are compositionally biased toward polar residues. Positions 720-730 (AGKEGKKDDKP) are enriched in basic and acidic residues. Residues 1085-1103 (GGEEEEEEEDEEEEDSIEV) are compositionally biased toward acidic residues. TPR repeat units lie at residues 1699-1732 (PAEW…EKEK) and 1793-1826 (LGKI…DLAL). Residues 2301 to 2330 (EEFEKLLHQEEDNYNRELKALESEKDERGR) are a coiled coil.

The polypeptide is TPR and ankyrin repeat-containing protein 1 (TRANK1) (Homo sapiens (Human)).